Consider the following 904-residue polypeptide: Alanine--tRNA ligase (904 aa).

Residues His-584, His-588, Cys-687, and His-691 each contribute to the Zn(2+) site.

This sequence belongs to the class-II aminoacyl-tRNA synthetase family. It depends on Zn(2+) as a cofactor.

It is found in the cytoplasm. The catalysed reaction is tRNA(Ala) + L-alanine + ATP = L-alanyl-tRNA(Ala) + AMP + diphosphate. In terms of biological role, catalyzes the attachment of alanine to tRNA(Ala) in a two-step reaction: alanine is first activated by ATP to form Ala-AMP and then transferred to the acceptor end of tRNA(Ala). Also edits incorrectly charged Ser-tRNA(Ala) and Gly-tRNA(Ala) via its editing domain. The protein is Alanine--tRNA ligase of Mycobacterium bovis (strain ATCC BAA-935 / AF2122/97).